The sequence spans 512 residues: Glucose-6-phosphate 1-dehydrogenase (512 aa).

Residues Arg61, 103-104 (EF), and Lys171 each bind NADP(+). Residues His201, Lys205, Glu239, and Asp258 each coordinate substrate. The active-site Proton acceptor is His263. The substrate site is built by Lys360 and Lys365. The disordered stretch occupies residues 479 to 512 (QDSSPSFPNYPAGSSGPKEADALIERDGRSWRPL). The segment covering 496-512 (KEADALIERDGRSWRPL) has biased composition (basic and acidic residues).

Belongs to the glucose-6-phosphate dehydrogenase family.

The enzyme catalyses D-glucose 6-phosphate + NADP(+) = 6-phospho-D-glucono-1,5-lactone + NADPH + H(+). The protein operates within carbohydrate degradation; pentose phosphate pathway; D-ribulose 5-phosphate from D-glucose 6-phosphate (oxidative stage): step 1/3. In terms of biological role, catalyzes the oxidation of glucose 6-phosphate to 6-phosphogluconolactone. This chain is Glucose-6-phosphate 1-dehydrogenase, found in Chlamydia pneumoniae (Chlamydophila pneumoniae).